A 440-amino-acid chain; its full sequence is ATP-dependent protease ATPase subunit HslU (440 aa).

ATP is bound by residues I18, 60–65 (GVGKTE), D252, E318, and R390.

This sequence belongs to the ClpX chaperone family. HslU subfamily. A double ring-shaped homohexamer of HslV is capped on each side by a ring-shaped HslU homohexamer. The assembly of the HslU/HslV complex is dependent on binding of ATP.

It localises to the cytoplasm. Its function is as follows. ATPase subunit of a proteasome-like degradation complex; this subunit has chaperone activity. The binding of ATP and its subsequent hydrolysis by HslU are essential for unfolding of protein substrates subsequently hydrolyzed by HslV. HslU recognizes the N-terminal part of its protein substrates and unfolds these before they are guided to HslV for hydrolysis. This is ATP-dependent protease ATPase subunit HslU from Acidithiobacillus ferrooxidans (strain ATCC 23270 / DSM 14882 / CIP 104768 / NCIMB 8455) (Ferrobacillus ferrooxidans (strain ATCC 23270)).